The following is a 134-amino-acid chain: L-ectoine synthase (134 aa).

This sequence belongs to the ectoine synthase family.

It catalyses the reaction (2S)-4-acetamido-2-aminobutanoate = L-ectoine + H2O. Its pathway is amine and polyamine biosynthesis; ectoine biosynthesis; L-ectoine from L-aspartate 4-semialdehyde: step 3/3. In terms of biological role, catalyzes the circularization of gamma-N-acetyl-alpha,gamma-diaminobutyric acid (ADABA) to ectoine (1,4,5,6-tetrahydro-2-methyl-4-pyrimidine carboxylic acid), which is an excellent osmoprotectant. The chain is L-ectoine synthase (ectC) from Sporosarcina pasteurii (Bacillus pasteurii).